The following is a 190-amino-acid chain: Segregation and condensation protein B (190 aa).

It belongs to the ScpB family. Homodimer. Homodimerization may be required to stabilize the binding of ScpA to the Smc head domains. Component of a cohesin-like complex composed of ScpA, ScpB and the Smc homodimer, in which ScpA and ScpB bind to the head domain of Smc. The presence of the three proteins is required for the association of the complex with DNA.

Its subcellular location is the cytoplasm. Its function is as follows. Participates in chromosomal partition during cell division. May act via the formation of a condensin-like complex containing Smc and ScpA that pull DNA away from mid-cell into both cell halves. The chain is Segregation and condensation protein B from Ruminiclostridium cellulolyticum (strain ATCC 35319 / DSM 5812 / JCM 6584 / H10) (Clostridium cellulolyticum).